A 230-amino-acid chain; its full sequence is Leucyl/phenylalanyl-tRNA--protein transferase (230 aa).

Belongs to the L/F-transferase family.

The protein localises to the cytoplasm. It carries out the reaction N-terminal L-lysyl-[protein] + L-leucyl-tRNA(Leu) = N-terminal L-leucyl-L-lysyl-[protein] + tRNA(Leu) + H(+). It catalyses the reaction N-terminal L-arginyl-[protein] + L-leucyl-tRNA(Leu) = N-terminal L-leucyl-L-arginyl-[protein] + tRNA(Leu) + H(+). The catalysed reaction is L-phenylalanyl-tRNA(Phe) + an N-terminal L-alpha-aminoacyl-[protein] = an N-terminal L-phenylalanyl-L-alpha-aminoacyl-[protein] + tRNA(Phe). Its function is as follows. Functions in the N-end rule pathway of protein degradation where it conjugates Leu, Phe and, less efficiently, Met from aminoacyl-tRNAs to the N-termini of proteins containing an N-terminal arginine or lysine. In Erwinia tasmaniensis (strain DSM 17950 / CFBP 7177 / CIP 109463 / NCPPB 4357 / Et1/99), this protein is Leucyl/phenylalanyl-tRNA--protein transferase.